The primary structure comprises 363 residues: DNA replication and repair protein RecF (363 aa).

30-37 (GDNAQGKT) serves as a coordination point for ATP.

This sequence belongs to the RecF family.

It is found in the cytoplasm. Its function is as follows. The RecF protein is involved in DNA metabolism; it is required for DNA replication and normal SOS inducibility. RecF binds preferentially to single-stranded, linear DNA. It also seems to bind ATP. The protein is DNA replication and repair protein RecF of Lachnospira eligens (strain ATCC 27750 / DSM 3376 / VPI C15-48 / C15-B4) (Eubacterium eligens).